A 217-amino-acid chain; its full sequence is Probable transaldolase (217 aa).

Lysine 83 (schiff-base intermediate with substrate) is an active-site residue.

The protein belongs to the transaldolase family. Type 3B subfamily.

The protein resides in the cytoplasm. The enzyme catalyses D-sedoheptulose 7-phosphate + D-glyceraldehyde 3-phosphate = D-erythrose 4-phosphate + beta-D-fructose 6-phosphate. It functions in the pathway carbohydrate degradation; pentose phosphate pathway; D-glyceraldehyde 3-phosphate and beta-D-fructose 6-phosphate from D-ribose 5-phosphate and D-xylulose 5-phosphate (non-oxidative stage): step 2/3. In terms of biological role, transaldolase is important for the balance of metabolites in the pentose-phosphate pathway. The polypeptide is Probable transaldolase (Brucella melitensis biotype 1 (strain ATCC 23456 / CCUG 17765 / NCTC 10094 / 16M)).